The primary structure comprises 636 residues: LDL receptor repeat-containing protein egg-1 (636 aa).

The Cytoplasmic segment spans residues 1 to 130 (MSSIAQKNRN…NHSNLFQCPS (130 aa)). The helical; Signal-anchor for type II membrane protein transmembrane segment at 131-151 (VAIVLVLALVILGVLAAIPLT) threads the bilayer. At 152–636 (LMLTSSAQKM…VLKNSGRFPY (485 aa)) the chain is on the extracellular side. The N-linked (GlcNAc...) asparagine glycan is linked to asparagine 202. LDL-receptor class A domains lie at 205–243 (TCSGFGFACTGAVHMVIPSSKRCDGFKDCQDGSDEENCK), 244–296 (ECQS…AMCK), 298–335 (TCSKDQFKCNGSNACLPLSAKCDGVKDCSDGSDENNCN), 336–375 (KCQKGAHVSLVSRNIKHLFASHVCDGVAQCADRSDEQQCD), 378–415 (TCSGSDKALCDDGTCIKRSQVCDGKKDCSDGMDEENCP), 457–499 (KCHP…KNCT), 503–541 (ECGIDNASQFTCDRKCVDASRRCDGVWDCEDKSDEQNCS), and 542–579 (QCASGSIKCSADKKCLPAYTRCNGVAECSDGSDELKCS). Intrachain disulfides connect cysteine 213/cysteine 233, cysteine 227/cysteine 242, cysteine 245/cysteine 273, cysteine 251/cysteine 286, cysteine 280/cysteine 295, cysteine 299/cysteine 312, cysteine 306/cysteine 325, cysteine 319/cysteine 334, cysteine 337/cysteine 365, cysteine 359/cysteine 374, cysteine 379/cysteine 392, cysteine 387/cysteine 405, cysteine 399/cysteine 414, cysteine 458/cysteine 476, cysteine 466/cysteine 489, cysteine 483/cysteine 498, cysteine 504/cysteine 518, cysteine 514/cysteine 531, cysteine 525/cysteine 540, cysteine 543/cysteine 556, cysteine 550/cysteine 569, and cysteine 563/cysteine 578. A glycan (N-linked (GlcNAc...) asparagine) is linked at asparagine 508. Residue asparagine 614 is glycosylated (N-linked (GlcNAc...) asparagine).

It is found in the cell membrane. In terms of biological role, probable receptor which is required for the oocyte-to-zygote transition although its exact function is controversial. Seems to be required for fertilization probably by promoting the interaction or fusion between sperm and oocyte. Conversely, shown to be dispensable for fertilization but required for the formation of a continuous and cohesive eggshell chitin layer by maintaining a homogenous distribution of chitin synthase chs-1 at the unfertilized oocyte cell membrane. Appears to recruit or maintain together to the unfertilized oocyte cortex several proteins including chs-1, kinase mbk-2 and pseudophosphatases egg-3, and possibly egg-4 and egg-5. This chain is LDL receptor repeat-containing protein egg-1, found in Caenorhabditis briggsae.